We begin with the raw amino-acid sequence, 380 residues long: SAM and SH3 domain-containing protein 3 (380 aa).

Disordered stretches follow at residues 1–76 (MLRR…GKKW) and 96–168 (LSEE…SPAP). The segment covering 22-41 (LQRSSSFKDFAKSKPSSPVV) has biased composition (low complexity). Phosphoserine is present on residues Ser27, Ser34, and Ser42. Thr61 carries the post-translational modification Phosphothreonine. Ser97 carries the post-translational modification Phosphoserine. Thr103 carries the post-translational modification Phosphothreonine. Ser110 is modified (phosphoserine). Residue Thr112 is modified to Phosphothreonine. Phosphoserine occurs at positions 113 and 120. Positions 141-150 (LSRQTSTGSE) are enriched in polar residues. The region spanning 173–234 (PFCGRARVHT…KFIYVDVLPE (62 aa)) is the SH3 domain. Residues 252–316 (PKPKTLHELL…LTAAELLLDY (65 aa)) enclose the SAM domain. Phosphothreonine is present on Thr318. Acidic residues predominate over residues 318–327 (TGSEEAEEGA). Residues 318-380 (TGSEEAEEGA…LQGLSLSGAP (63 aa)) are disordered. Residue Ser320 is modified to Phosphoserine. A compositionally biased stretch (polar residues) spans 369–380 (EQLQGLSLSGAP).

In terms of tissue distribution, preferentially expressed in lymphoid tissues. Expressed in bone marrow, thymus, spleen, lymph nodes and Peyer patches of gut. In the spleen and lymph nodes, expressed in both T- and B-cells. In the thymus, in the medulla and cortex.

May function as a signaling adapter protein in lymphocytes. The polypeptide is SAM and SH3 domain-containing protein 3 (Sash3) (Mus musculus (Mouse)).